Reading from the N-terminus, the 376-residue chain is Delta(12) fatty acid desaturase fat-2 (376 aa).

Transmembrane regions (helical) follow at residues I45–I65, L69–F89, V203–C223, and Y228–I248.

The protein belongs to the fatty acid desaturase type 1 family.

It localises to the membrane. It carries out the reaction (9Z)-octadecenoyl-CoA + 2 Fe(II)-[cytochrome b5] + O2 + 2 H(+) = (9Z,12Z)-octadecadienoyl-CoA + 2 Fe(III)-[cytochrome b5] + 2 H2O. It catalyses the reaction (9Z)-hexadecenoyl-CoA + 2 Fe(II)-[cytochrome b5] + O2 + 2 H(+) = (9Z,12Z)-hexadecadienoyl-CoA + 2 Fe(III)-[cytochrome b5] + 2 H2O. The catalysed reaction is (9Z,12Z)-octadecadienoyl-CoA + 2 Fe(II)-[cytochrome b5] + O2 + 2 H(+) = (9Z,12Z,15Z)-octadecatrienoyl-CoA + 2 Fe(III)-[cytochrome b5] + 2 H2O. The enzyme catalyses (9Z)-heptadecenoyl-CoA + 2 Fe(II)-[cytochrome b5] + O2 + 2 H(+) = (9Z,12Z)-heptadecadienoyl-CoA + 2 Fe(III)-[cytochrome b5] + 2 H2O. It carries out the reaction (9Z)-pentadecenoyl-CoA + 2 Fe(II)-[cytochrome b5] + O2 + 2 H(+) = (9Z,12Z)-pentadecadienoyl-CoA + 2 Fe(III)-[cytochrome b5] + 2 H2O. It catalyses the reaction (6Z,9Z,12Z)-octadecatrienoyl-CoA + 2 Fe(II)-[cytochrome b5] + O2 + 2 H(+) = (6Z,9Z,12Z,15Z)-octadecatetraenoyl-CoA + 2 Fe(III)-[cytochrome b5] + 2 H2O. The catalysed reaction is (9Z)-tetradecenoyl-CoA + 2 Fe(II)-[cytochrome b5] + O2 + 2 H(+) = (9Z,12Z)-tetradecadienoyl-CoA + 2 Fe(III)-[cytochrome b5] + 2 H2O. The protein operates within lipid metabolism; polyunsaturated fatty acid biosynthesis. In terms of biological role, can function as a Delta(12)/Delta(15) bifunctional desaturase and behaves as a nu +3' desaturase. Introduces a double bond in the fatty acid chain three carbons away from an existing double bond to biosynthesize polyunsaturated fatty acids (PUFAs) endogenously (PUFAs are essential for membrane structure and many cellular and physiological processes). Acts on a number of substrates like oleoyl-CoA ((9Z)-octadecenoyl-CoA, 18:1n-9), palmitoleoyl-CoA ((9Z)-hexadecenoyl-CoA, 16:1n-7), and gamma-linolenoyl-CoA ((6Z,9Z,12Z)-octadecatrienoyl-CoA, 18:3n-6), to generate linoleoyl-CoA ((9Z,12Z)-octadecadienoyl-CoA, 18:2n-6), (9Z,12Z)-hexadecadienoyl-CoA (16:2n-4) and (6Z,9Z,12Z,15Z)-octadecatetraenoyl-CoA (18:4n-3) respectively. Unlike plants, Caenorhabditis elegans desaturases seem to use fatty acyl-CoAs as substrates. This is Delta(12) fatty acid desaturase fat-2 (fat-2) from Caenorhabditis elegans.